A 364-amino-acid polypeptide reads, in one-letter code: WAT1-related protein At5g47470 (364 aa).

10 consecutive transmembrane segments (helical) span residues 28–48 (MVIV…SLLM), 59–79 (FTIV…FAIL), 93–113 (LIGK…SLFL), 124–144 (ATAM…IVGL), 158–178 (ILGT…HSTS), 197–217 (VVGC…VVLQ), 228–248 (ISLS…VLLL), 255–275 (VLAS…LAGA), 293–313 (PVFV…FAVL), and 319–339 (VSLG…LVLW). In terms of domain architecture, EamA 1 spans 40–172 (VYAGNSLLMS…LCVFGALAMS (133 aa)). Residues 219-338 (STLAEFPAPI…LMFVGLYLVL (120 aa)) form the EamA 2 domain.

The protein belongs to the drug/metabolite transporter (DMT) superfamily. Plant drug/metabolite exporter (P-DME) (TC 2.A.7.4) family.

The protein localises to the membrane. This is WAT1-related protein At5g47470 from Arabidopsis thaliana (Mouse-ear cress).